A 374-amino-acid polypeptide reads, in one-letter code: 2-oxoglutarate-Fe(II) type oxidoreductase ppzC (374 aa).

A disordered region spans residues 111–131; it reads KKGPFDSGYRGPGTQRVNPDE. Residues 220 to 330 form the Fe2OG dioxygenase domain; the sequence is YPDASLEINF…RVSMPFFWGF (111 aa). Fe cation-binding residues include His254, Asp256, and His311. Residue Arg321 participates in 2-oxoglutarate binding.

The protein belongs to the iron/ascorbate-dependent oxidoreductase family. Fe(2+) serves as cofactor.

It carries out the reaction peramine + 2-oxoglutarate + O2 = 8-hydroxyperamine + succinate + CO2. Its pathway is secondary metabolite biosynthesis. 2-oxoglutarate-Fe(II) type oxidoreductase; part of the gene cluster that mediates the biosynthesis of pyrrolopyrazines, secondary metabolites showing insecticidal activity. Within the pathway, ppzC uses peramine as substrate for hydroxylation to yield the novel analog 8-hydroxyperamine. The single multifunctional NRPS ppzA is sufficient to produce peramine via condensation of 1-pyrroline-5-carboxylate and arginine, N-methylation of the alpha-amino group of arginine and reduction of the thioester and the cyclization to form an iminium ion resulting in release from the peptide synthetase. Deprotonation of this intermediate and oxidation of the pyrroline ring would give rise to peramine. In Epichloe species that produce only peramine, the peramine synthetase gene is not localized in a gene cluster, in contrast to Metarhizium species that contain additional pyrrolopyrazine biosynthesis genes. The 2-oxoglutarate-Fe(II) type oxidoreductase ppzC hydroxylates peramine to yield the newly identified compound 8-hydroxyperamine whereas ppzD converts L-proline into trans-4-hydroxy-L-proline, a precursor of peramine biosynthesis. The polypeptide is 2-oxoglutarate-Fe(II) type oxidoreductase ppzC (ppzC) (Metarhizium majus (strain ARSEF 297)).